A 333-amino-acid chain; its full sequence is DNA-directed RNA polymerase subunit alpha (333 aa).

Residues 1 to 233 (MVREKIRVST…DLFIPFLHAE (233 aa)) form an alpha N-terminal domain (alpha-NTD) region. Positions 269–333 (IALKYIFIDQ…DILEMEKNFA (65 aa)) are alpha C-terminal domain (alpha-CTD).

It belongs to the RNA polymerase alpha chain family. In plastids the minimal PEP RNA polymerase catalytic core is composed of four subunits: alpha, beta, beta', and beta''. When a (nuclear-encoded) sigma factor is associated with the core the holoenzyme is formed, which can initiate transcription.

The protein localises to the plastid. It is found in the chloroplast. The enzyme catalyses RNA(n) + a ribonucleoside 5'-triphosphate = RNA(n+1) + diphosphate. Functionally, DNA-dependent RNA polymerase catalyzes the transcription of DNA into RNA using the four ribonucleoside triphosphates as substrates. This Cucumis sativus (Cucumber) protein is DNA-directed RNA polymerase subunit alpha.